The sequence spans 168 residues: Lipoprotein signal peptidase (168 aa).

3 helical membrane-spanning segments follow: residues 6–26 (VLAA…DQIT), 70–90 (WFLA…IAKL), and 98–118 (ALAL…RMLL). Active-site residues include aspartate 123 and aspartate 141. The helical transmembrane segment at 139–159 (IADSAICIGAALLVWDSLFGT) threads the bilayer.

Belongs to the peptidase A8 family.

It localises to the cell inner membrane. The enzyme catalyses Release of signal peptides from bacterial membrane prolipoproteins. Hydrolyzes -Xaa-Yaa-Zaa-|-(S,diacylglyceryl)Cys-, in which Xaa is hydrophobic (preferably Leu), and Yaa (Ala or Ser) and Zaa (Gly or Ala) have small, neutral side chains.. The protein operates within protein modification; lipoprotein biosynthesis (signal peptide cleavage). Functionally, this protein specifically catalyzes the removal of signal peptides from prolipoproteins. In Teredinibacter turnerae (strain ATCC 39867 / T7901), this protein is Lipoprotein signal peptidase.